A 100-amino-acid chain; its full sequence is MRLTPREIDKLLVVVAADLAYRRKERGLKLNYPESIAIITYEILEGARDGKNVAELMELGKNILSAEDVMDGIADMISDIQVEATFPDGTKLVTIHQPIH.

The protein belongs to the urease gamma subunit family. Heterotrimer of UreA (gamma), UreB (beta) and UreC (alpha) subunits. Three heterotrimers associate to form the active enzyme.

It localises to the cytoplasm. The catalysed reaction is urea + 2 H2O + H(+) = hydrogencarbonate + 2 NH4(+). It functions in the pathway nitrogen metabolism; urea degradation; CO(2) and NH(3) from urea (urease route): step 1/1. This chain is Urease subunit gamma, found in Bacillus cereus (strain ATCC 10987 / NRS 248).